The primary structure comprises 417 residues: Glucose-1-phosphate adenylyltransferase (417 aa).

Residues Y105, G170, 185 to 186 (EK), and S203 contribute to the alpha-D-glucose 1-phosphate site.

The protein belongs to the bacterial/plant glucose-1-phosphate adenylyltransferase family. In terms of assembly, homotetramer.

It carries out the reaction alpha-D-glucose 1-phosphate + ATP + H(+) = ADP-alpha-D-glucose + diphosphate. It participates in glycan biosynthesis; glycogen biosynthesis. Involved in the biosynthesis of ADP-glucose, a building block required for the elongation reactions to produce glycogen. Catalyzes the reaction between ATP and alpha-D-glucose 1-phosphate (G1P) to produce pyrophosphate and ADP-Glc. This is Glucose-1-phosphate adenylyltransferase from Granulibacter bethesdensis (strain ATCC BAA-1260 / CGDNIH1).